Reading from the N-terminus, the 178-residue chain is Probable host range protein 2 (178 aa).

The protein belongs to the poxviridae C7 protein family.

In terms of biological role, plays a role for multiplication of the virus in different cell types. In Yaba-like disease virus (YLDV), this protein is Probable host range protein 2.